The sequence spans 275 residues: Fructoselysine 3-epimerase (275 aa).

Glu-148 (proton donor/acceptor) is an active-site residue. A divalent metal cation-binding residues include Glu-148, Asp-181, His-207, and Glu-247. Glu-247 functions as the Proton donor/acceptor in the catalytic mechanism.

This sequence belongs to the FrlC family. Homooctamer. It depends on Ni(2+) as a cofactor. The cofactor is Co(2+).

The catalysed reaction is N(6)-(D-psicosyl)-L-lysine = N(6)-(D-fructosyl)-L-lysine. Functionally, catalyzes the reversible interconversion of fructoselysine with its C-3 epimer, psicoselysine. Allows E.coli to utilize psicoselysine for growth. Does not act on psicose or fructoselysine 6-phosphate. This is Fructoselysine 3-epimerase (frlC) from Escherichia coli O157:H7.